Consider the following 458-residue polypeptide: F-box/FBD/LRR-repeat protein At1g78750 (458 aa).

Residues 17–67 (VDWISNLPETLLCQVLFYLPTKDVVKSSVLSSRWRNLWKYVPGFNLSYCDF) form the F-box domain. LRR repeat units lie at residues 152-183 (CETL…HLSI), 184-209 (VKFA…NINR), 231-258 (VADT…RLSD), 302-327 (DFLV…YDYS), and 345-370 (FYGY…VVGS). An FBD domain is found at 376–428 (KEGINILSVPRGFLSSLEYVKIERPLKGEAMEMKLVSYLLENSTILKKLTLCL).

The chain is F-box/FBD/LRR-repeat protein At1g78750 from Arabidopsis thaliana (Mouse-ear cress).